The primary structure comprises 331 residues: Adenosine deaminase (331 aa).

Positions 12 and 14 each coordinate Zn(2+). 3 residues coordinate substrate: H14, D16, and G170. Zn(2+) is bound at residue H197. The Proton donor role is filled by E200. D278 serves as a coordination point for Zn(2+).

It belongs to the metallo-dependent hydrolases superfamily. Adenosine and AMP deaminases family. Adenosine deaminase subfamily. Zn(2+) is required as a cofactor.

It carries out the reaction adenosine + H2O + H(+) = inosine + NH4(+). The catalysed reaction is 2'-deoxyadenosine + H2O + H(+) = 2'-deoxyinosine + NH4(+). Catalyzes the hydrolytic deamination of adenosine and 2-deoxyadenosine. This Shewanella woodyi (strain ATCC 51908 / MS32) protein is Adenosine deaminase.